Here is an 883-residue protein sequence, read N- to C-terminus: DNA mismatch repair protein MutS (883 aa).

633–640 (GPNMGGKS) lines the ATP pocket.

This sequence belongs to the DNA mismatch repair MutS family.

Functionally, this protein is involved in the repair of mismatches in DNA. It is possible that it carries out the mismatch recognition step. This protein has a weak ATPase activity. The polypeptide is DNA mismatch repair protein MutS (Bordetella parapertussis (strain 12822 / ATCC BAA-587 / NCTC 13253)).